Here is a 591-residue protein sequence, read N- to C-terminus: Nuclear receptor subfamily 4 group A member 2 (591 aa).

Disordered regions lie at residues 1–22 and 110–133; these read MPCV…SQSY and SEEM…SSTP. Residues 8 to 22 are compositionally biased toward low complexity; the sequence is YGSSPQGASPASQSY. Positions 253 to 328 form a DNA-binding region, nuclear receptor; it reads EGLCAVCGDN…VGMVKEVVRT (76 aa). 2 consecutive NR C4-type zinc fingers follow at residues 256-276 and 292-311; these read CAVC…CEGC and CLAN…CQYC. Residues 280-307 carry the Bipartite nuclear localization signal (NLS1) motif; sequence FKRTVQKNAKYVCLANKNCPVDKRRRNR. The segment at 330–354 is disordered; sequence SLKGRRGRLPSKPKSPQEPSPPSPP. The short motif at 331–343 is the Nuclear localization signal (NLS1) element; that stretch reads LKGRRGRLPSKPK. Residues 345-354 are compositionally biased toward pro residues; it reads PQEPSPPSPP. In terms of domain architecture, NR LBD spans 353–588; the sequence is PPVSLISALV…AIIDKLFLDT (236 aa). Residues 436–445 carry the nuclear export sequence (NES1) motif; sequence FLELFVLRLA. The nuclear export sequence (NES2) motif lies at 561–570; it reads QGLQRIFYLK.

It belongs to the nuclear hormone receptor family.

The protein localises to the cytoplasm. It localises to the nucleus. Functionally, transcriptional regulator which may play a role in the differentiation and maintenance of meso-diencephalic dopaminergic (mdDA) neurons. In Xenopus tropicalis (Western clawed frog), this protein is Nuclear receptor subfamily 4 group A member 2 (nr4a2).